Reading from the N-terminus, the 329-residue chain is Malate dehydrogenase (329 aa).

12–18 contacts NAD(+); the sequence is GAAGQIG. Substrate contacts are provided by R93 and R99. NAD(+)-binding positions include N106, Q113, and 130–132; that span reads TGN. Residues N132 and R163 each contribute to the substrate site. H188 acts as the Proton acceptor in catalysis.

The protein belongs to the LDH/MDH superfamily. MDH type 2 family.

It catalyses the reaction (S)-malate + NAD(+) = oxaloacetate + NADH + H(+). Catalyzes the reversible oxidation of malate to oxaloacetate. In Mycolicibacterium paratuberculosis (strain ATCC BAA-968 / K-10) (Mycobacterium paratuberculosis), this protein is Malate dehydrogenase.